Here is a 434-residue protein sequence, read N- to C-terminus: Cyclic 2,3-diphosphoglycerate synthetase (434 aa).

This sequence belongs to the cyclic 2,3-diphosphoglycerate synthetase family.

The protein localises to the cytoplasm. The catalysed reaction is (2R)-2,3-bisphosphoglycerate + ATP + H(+) = cyclic (2R)-2,3-bisphosphoglycerate + ADP + phosphate. Functionally, catalyzes the formation of cyclic 2,3-diphosphoglycerate (cDPG) by formation of an intramolecular phosphoanhydride bond at the expense of ATP. The sequence is that of Cyclic 2,3-diphosphoglycerate synthetase from Thermococcus sibiricus (strain DSM 12597 / MM 739).